The primary structure comprises 252 residues: Ribosomal RNA small subunit methyltransferase J (252 aa).

S-adenosyl-L-methionine is bound by residues 101–102 (RD), 117–118 (ER), 153–154 (SS), and Asp-171.

The protein belongs to the methyltransferase superfamily. RsmJ family.

It is found in the cytoplasm. It carries out the reaction guanosine(1516) in 16S rRNA + S-adenosyl-L-methionine = N(2)-methylguanosine(1516) in 16S rRNA + S-adenosyl-L-homocysteine + H(+). Specifically methylates the guanosine in position 1516 of 16S rRNA. This chain is Ribosomal RNA small subunit methyltransferase J, found in Salmonella typhimurium (strain LT2 / SGSC1412 / ATCC 700720).